The primary structure comprises 397 residues: Teichoic acid D-alanine hydrolase (397 aa).

The signal sequence occupies residues Met1–Ala23.

The protein resides in the cell membrane. The catalysed reaction is [(4-D-Ala)-(2-GlcNAc)-Rib-ol-P]n-[Gro-P]m-beta-D-ManNAc-(1-&gt;4)-alpha-D-GlcNAc-P-peptidoglycan + n H2O = [(2-GlcNAc)-Rib-ol-P]n-[Gro-P]m-beta-D-ManNAc-(1-&gt;4)-alpha-D-GlcNAc-P-peptidoglycan + n D-alanine.. Catalyzes the liberation of D-alanyl moieties present on wall teichoic acid (WTA) and lipoteichoic acid (LTA). Affects the methicillin resistance level and autolysis in the presence of Triton X-100 as well as the cell wall structure. The polypeptide is Teichoic acid D-alanine hydrolase (fmtA) (Staphylococcus aureus (strain Mu50 / ATCC 700699)).